Here is a 122-residue protein sequence, read N- to C-terminus: Large ribosomal subunit protein uL14 (122 aa).

The protein belongs to the universal ribosomal protein uL14 family. As to quaternary structure, part of the 50S ribosomal subunit. Forms a cluster with proteins L3 and L19. In the 70S ribosome, L14 and L19 interact and together make contacts with the 16S rRNA in bridges B5 and B8.

In terms of biological role, binds to 23S rRNA. Forms part of two intersubunit bridges in the 70S ribosome. The chain is Large ribosomal subunit protein uL14 from Lawsonia intracellularis (strain PHE/MN1-00).